A 170-amino-acid polypeptide reads, in one-letter code: Lipoprotein signal peptidase (170 aa).

A run of 4 helical transmembrane segments spans residues 11-31 (LGWL…KAHF), 41-61 (IVVI…AAFS), 69-89 (WQRW…VVWL), and 95-115 (DDTW…GNLY). Residues D125 and D144 contribute to the active site. Residues 136 to 156 (YFPAFNFADSAITVGAIMLAL) traverse the membrane as a helical segment.

The protein belongs to the peptidase A8 family.

The protein localises to the cell inner membrane. It catalyses the reaction Release of signal peptides from bacterial membrane prolipoproteins. Hydrolyzes -Xaa-Yaa-Zaa-|-(S,diacylglyceryl)Cys-, in which Xaa is hydrophobic (preferably Leu), and Yaa (Ala or Ser) and Zaa (Gly or Ala) have small, neutral side chains.. It participates in protein modification; lipoprotein biosynthesis (signal peptide cleavage). This protein specifically catalyzes the removal of signal peptides from prolipoproteins. In Pseudomonas fluorescens, this protein is Lipoprotein signal peptidase.